A 299-amino-acid polypeptide reads, in one-letter code: uncharacterized protein (299 aa).

A disordered region spans residues 1–44; the sequence is MSDSNLTNPIKAFFHDEFPEQYQEPPGLQKNMKPVPDCGEKSYK. 55–79 lines the NADP(+) pocket; sequence LVTGGDSGIGRAAAIAYAREGADVA. Residue S188 participates in substrate binding. Catalysis depends on Y201, which acts as the Proton acceptor.

Belongs to the short-chain dehydrogenases/reductases (SDR) family.

This is an uncharacterized protein from Bacillus subtilis (strain 168).